Consider the following 589-residue polypeptide: Guanylate-binding protein 1 (589 aa).

A GTPase domain (Globular) region spans residues 1-309 (MASEIHMSEP…SAICSGELPC (309 aa)). Residues 35 to 276 (TQPVVVVAIV…FTSYIFSYSG (242 aa)) enclose the GB1/RHD3-type G domain. Residues 47–53 (YRTGKSY), 67–69 (LGS), and 97–101 (DTEGL) contribute to the GTP site. A Phosphoserine modification is found at Ser-156. Cys-586 is subject to Cysteine methyl ester. Residue Cys-586 is the site of S-farnesyl cysteine attachment. Cys-586 carries S-geranylgeranyl cysteine; partial lipidation. At Thr-587 the chain carries Phosphothreonine. A propeptide spans 587–589 (TIL) (removed in mature form).

Belongs to the TRAFAC class dynamin-like GTPase superfamily. GB1/RHD3 GTPase family. GB1 subfamily. As to quaternary structure, homodimer; homodimerization occurs upon GTP-binding and is required for the second hydrolysis step from GDP to GMP. Undergoes conformational changes and oligomerization upon GTP-binding and hydrolysis. Heterodimer with other family members, including GBP2, GBP3, GBP4 and GBP5. Dimerization regulates subcellular location to membranous structures. Interacts with SQSTM1. Interacts (when phosphorylated) with 14-3-3 protein sigma (SFN); leading to GBP1 retention in the cytosol and inactivation. In terms of processing, isoprenylation of mouse GBP1 is incomplete. It persistently exists in the cell as a mixture of C20-modified and (more predominantly) unmodified form. Isoprenylation is required for proper subcellular location. Phosphorylated at Ser-156 by PIM1 in absence of infection, inhibits GBP1: phosphorylation promotes interaction with 14-3-3 protein sigma (SFN), leading to GBP1 retention in the cytosol. Dephosphorylated in response to infection, liberating GBP1.

The protein resides in the cytoplasmic vesicle membrane. Its subcellular location is the golgi apparatus membrane. It localises to the cell membrane. It is found in the cytoplasm. The protein localises to the cytosol. The protein resides in the secreted. The catalysed reaction is GTP + H2O = GDP + phosphate + H(+). It catalyses the reaction GDP + H2O = GMP + phosphate + H(+). In terms of biological role, interferon (IFN)-inducible GTPase that plays important roles in innate immunity against a diverse range of bacterial, viral and protozoan pathogens. Hydrolyzes GTP to GMP in two consecutive cleavage reactions: GTP is first hydrolyzed to GDP and then to GMP in a processive manner. Following infection, recruited to the pathogen-containing vacuoles or vacuole-escaped bacteria and promotes both inflammasome assembly and autophagy. Acts as a positive regulator of inflammasome assembly by facilitating the detection of inflammasome ligands from pathogens. Involved in the lysis of pathogen-containing vacuoles, releasing pathogens into the cytosol. Following pathogen release in the cytosol, forms a protein coat in a GTPase-dependent manner that encapsulates pathogens and promotes the detection of ligands by pattern recognition receptors. Plays a key role in inflammasome assembly in response to infection by Gram-negative bacteria: following pathogen release in the cytosol, forms a protein coat that encapsulates Gram-negative bacteria and directly binds to lipopolysaccharide (LPS), disrupting the O-antigen barrier and unmasking lipid A that is that detected by the non-canonical inflammasome effector CASP4/CASP11. Also promotes recruitment of proteins that mediate bacterial cytolysis, leading to release double-stranded DNA (dsDNA) that activates the AIM2 inflammasome. Involved in autophagy by regulating bacteriolytic peptide generation via its interaction with ubiquitin-binding protein SQSTM1, which delivers monoubiquitinated proteins to autolysosomes for the generation of bacteriolytic peptides. Confers protection to several pathogens, including the bacterial pathogens L.monocytogenes and M.bovis BCG as well as the protozoan pathogen T.gondii. Exhibits antiviral activity against influenza virus. The polypeptide is Guanylate-binding protein 1 (Gbp1) (Mus musculus (Mouse)).